A 398-amino-acid chain; its full sequence is Phosphoglycerate kinase (398 aa).

Substrate contacts are provided by residues 21-23 (DFN), Arg41, 64-67 (HLGR), Arg123, and Arg156. Residues Lys207, Gly294, Glu325, and 354-357 (GGDS) contribute to the ATP site.

The protein belongs to the phosphoglycerate kinase family. Monomer.

It is found in the cytoplasm. It carries out the reaction (2R)-3-phosphoglycerate + ATP = (2R)-3-phospho-glyceroyl phosphate + ADP. The protein operates within carbohydrate degradation; glycolysis; pyruvate from D-glyceraldehyde 3-phosphate: step 2/5. This Salinibacter ruber (strain DSM 13855 / M31) protein is Phosphoglycerate kinase.